The chain runs to 167 residues: MKIGVYPGSFDPVTNGHLDIIERASKIFDKLIVAVLVNPNKTPVFDIEERVELLKETTEHLPNVEVKAFKGLLIDFMKQENAKVIVKGLRAVSDFEYEFQMALLNKKLEPSIETIFMMTNSKYSYLSSSMVKEVARFGGCIEDLVPEKIAKKVMKKLNKKYTEMEEK.

Ser9 contributes to the substrate binding site. Residues 9–10 (SF) and His17 each bind ATP. The substrate site is built by Lys41, Leu73, and Lys87. ATP is bound by residues 88 to 90 (GLR), Glu98, and 123 to 129 (YSYLSSS).

Belongs to the bacterial CoaD family. As to quaternary structure, homohexamer. It depends on Mg(2+) as a cofactor.

It is found in the cytoplasm. The enzyme catalyses (R)-4'-phosphopantetheine + ATP + H(+) = 3'-dephospho-CoA + diphosphate. The protein operates within cofactor biosynthesis; coenzyme A biosynthesis; CoA from (R)-pantothenate: step 4/5. Reversibly transfers an adenylyl group from ATP to 4'-phosphopantetheine, yielding dephospho-CoA (dPCoA) and pyrophosphate. The polypeptide is Phosphopantetheine adenylyltransferase (Caldicellulosiruptor bescii (strain ATCC BAA-1888 / DSM 6725 / KCTC 15123 / Z-1320) (Anaerocellum thermophilum)).